The following is a 161-amino-acid chain: Large ribosomal subunit protein uL11 (161 aa).

Belongs to the universal ribosomal protein uL11 family. In terms of assembly, part of the ribosomal stalk of the 50S ribosomal subunit. Interacts with L10 and the large rRNA to form the base of the stalk. L10 forms an elongated spine to which L12 dimers bind in a sequential fashion forming a multimeric L10(L12)X complex.

Its function is as follows. Forms part of the ribosomal stalk which helps the ribosome interact with GTP-bound translation factors. This is Large ribosomal subunit protein uL11 from Methanosarcina acetivorans (strain ATCC 35395 / DSM 2834 / JCM 12185 / C2A).